The following is a 144-amino-acid chain: UPF0299 membrane protein MS1271 (144 aa).

The next 4 membrane-spanning stretches (helical) occupy residues 5–25, 28–48, 57–77, and 92–112; these read IFLF…GEGI, LIPI…IGLT, VFFG…PVSV, and SLLI…GFLG.

This sequence belongs to the UPF0299 family.

The protein localises to the cell inner membrane. This chain is UPF0299 membrane protein MS1271, found in Mannheimia succiniciproducens (strain KCTC 0769BP / MBEL55E).